Consider the following 106-residue polypeptide: Ribosomal processing cysteine protease Prp (106 aa).

Residue histidine 22 is the Proton donor of the active site. The active-site Nucleophile is the cysteine 34.

The protein belongs to the Prp family. As to quaternary structure, homodimer. A mutant protein unable to cleave bL27 copurifies with its substrate.

Its activity is regulated as follows. Not inhibited by short peptide analogs; a 6-mer inhibits only 20% while a 13-mer inhibits 63%. Inhibited by Ac-KLNLQFF-CH(2) which binds covalantly to Cys-34. Inhibited by mersalyl acid (C13H18HgNO6). Functionally, an essential cysteine protease that cleaves the N-terminal 9 amino acids from ribosomal protein bL27. Also acts as an N-terminal protease on the major capsid and scaffold assembly proteins of bacteriophage 80alpha. Cleavage of the N-terminus of bL27 (and thus this enzyme) is essential for growth; it cannot be replaced by a 'pre-cleaved' or non-cleavable form of bL27. Might serve a chaperone function during ribosome assembly. The chain is Ribosomal processing cysteine protease Prp from Staphylococcus aureus (strain NCTC 8325 / PS 47).